A 224-amino-acid polypeptide reads, in one-letter code: MKPQNLKVPFFWEERSTEIKDNVLYIPNHYFKHDQFIMPSWEEFFGNNNPISCELCSGNGDWVVSQAQNMPQMNWIAVEKRFDRVRKIWSKMHNFQVSNLRIVCGEAQTFFRHYLKNEILQRIVVNFPDPWPKSRHRKHRLFQDEFMNDVVRVLVESGILVLATDDKNYLVEAIKMMRQCLLPTIEDPYYCKVLDNYGDSWFERLWRSKGQEIFYTEFVKKVGI.

S-adenosyl-L-methionine-binding residues include Glu54, Glu79, Glu106, and Asp129. The active site involves Asp129. Residues Lys133 and Asp165 each contribute to the substrate site.

Belongs to the class I-like SAM-binding methyltransferase superfamily. TrmB family.

It carries out the reaction guanosine(46) in tRNA + S-adenosyl-L-methionine = N(7)-methylguanosine(46) in tRNA + S-adenosyl-L-homocysteine. The protein operates within tRNA modification; N(7)-methylguanine-tRNA biosynthesis. Its function is as follows. Catalyzes the formation of N(7)-methylguanine at position 46 (m7G46) in tRNA. This chain is tRNA (guanine-N(7)-)-methyltransferase, found in Chlamydia caviae (strain ATCC VR-813 / DSM 19441 / 03DC25 / GPIC) (Chlamydophila caviae).